The chain runs to 473 residues: High-affinity proline transporter PutP (473 aa).

Helical transmembrane passes span 32–52 (LSAG…GAMF), 56–76 (LSGA…WLYV), 114–134 (IVIL…GGVL), 146–166 (GLWI…FLAV), 171–191 (FVQG…TFFH), 218–238 (VLGI…PHII), 256–276 (IGMG…LGGI), 299–319 (ILFH…AIMS), 350–370 (LVFL…VLAW), 376–396 (ILGL…PVVL), 408–428 (GALA…NAGL), and 431–451 (FLYE…FVSI).

This sequence belongs to the sodium:solute symporter (SSF) (TC 2.A.21) family.

The protein localises to the cell membrane. The catalysed reaction is L-proline(in) + Na(+)(in) = L-proline(out) + Na(+)(out). In terms of biological role, catalyzes the high-affinity uptake of extracellular proline. Important for the use of proline as a sole carbon and energy source or a sole nitrogen source. The sequence is that of High-affinity proline transporter PutP from Bacillus subtilis (strain 168).